The chain runs to 600 residues: Proline--tRNA ligase (600 aa).

Belongs to the class-II aminoacyl-tRNA synthetase family. ProS type 1 subfamily. Homodimer.

Its subcellular location is the cytoplasm. It catalyses the reaction tRNA(Pro) + L-proline + ATP = L-prolyl-tRNA(Pro) + AMP + diphosphate. Its function is as follows. Catalyzes the attachment of proline to tRNA(Pro) in a two-step reaction: proline is first activated by ATP to form Pro-AMP and then transferred to the acceptor end of tRNA(Pro). As ProRS can inadvertently accommodate and process non-cognate amino acids such as alanine and cysteine, to avoid such errors it has two additional distinct editing activities against alanine. One activity is designated as 'pretransfer' editing and involves the tRNA(Pro)-independent hydrolysis of activated Ala-AMP. The other activity is designated 'posttransfer' editing and involves deacylation of mischarged Ala-tRNA(Pro). The misacylated Cys-tRNA(Pro) is not edited by ProRS. The polypeptide is Proline--tRNA ligase (Prochlorococcus marinus (strain MIT 9515)).